A 643-amino-acid polypeptide reads, in one-letter code: 1-deoxy-D-xylulose-5-phosphate synthase (643 aa).

Residues histidine 71 and 112-114 each bind thiamine diphosphate; that span reads SHA. Aspartate 144 provides a ligand contact to Mg(2+). Thiamine diphosphate contacts are provided by residues 145 to 146, asparagine 173, tyrosine 284, and glutamate 365; that span reads GA. Mg(2+) is bound at residue asparagine 173.

This sequence belongs to the transketolase family. DXPS subfamily. In terms of assembly, homodimer. Mg(2+) serves as cofactor. The cofactor is thiamine diphosphate.

The catalysed reaction is D-glyceraldehyde 3-phosphate + pyruvate + H(+) = 1-deoxy-D-xylulose 5-phosphate + CO2. The protein operates within metabolic intermediate biosynthesis; 1-deoxy-D-xylulose 5-phosphate biosynthesis; 1-deoxy-D-xylulose 5-phosphate from D-glyceraldehyde 3-phosphate and pyruvate: step 1/1. Catalyzes the acyloin condensation reaction between C atoms 2 and 3 of pyruvate and glyceraldehyde 3-phosphate to yield 1-deoxy-D-xylulose-5-phosphate (DXP). This chain is 1-deoxy-D-xylulose-5-phosphate synthase, found in Mycobacterium leprae (strain Br4923).